A 486-amino-acid chain; its full sequence is Katanin p60 ATPase-containing subunit A1 (486 aa).

Residues 103–174 (RSSPLPVRRP…NKAEVSEKEV (72 aa)) form a disordered region. The span at 143–174 (NGDRAKPLKGKEKKEAKPKDDKNKAEVSEKEV) shows a compositional bias: basic and acidic residues. 244–251 (GPPGTGKT) provides a ligand contact to ATP.

This sequence belongs to the AAA ATPase family. Katanin p60 subunit A1 subfamily. Can homooligomerize into hexameric rings, which may be promoted by interaction with microtubules. Interacts with katnb1, which may serve as a targeting subunit.

The protein localises to the cytoplasm. It is found in the cytoskeleton. Its subcellular location is the microtubule organizing center. It localises to the centrosome. The protein resides in the spindle pole. The protein localises to the spindle. It carries out the reaction n ATP + n H2O + a microtubule = n ADP + n phosphate + (n+1) alpha/beta tubulin heterodimers.. ATPase activity is stimulated by microtubules, which promote homooligomerization. ATP-dependent microtubule severing is stimulated by interaction with katnb1. Functionally, catalytic subunit of a complex which severs microtubules in an ATP-dependent manner. Microtubule severing may promote rapid reorganization of cellular microtubule arrays and the release of microtubules from the centrosome following nucleation. In Salmo salar (Atlantic salmon), this protein is Katanin p60 ATPase-containing subunit A1 (katna1).